Here is a 401-residue protein sequence, read N- to C-terminus: Enoyl-[acyl-carrier-protein] reductase [NADH] (401 aa).

NAD(+)-binding positions include 48 to 53 (GASSGY), 74 to 75 (FE), 111 to 112 (DA), and 140 to 141 (LA). Tyr-226 lines the substrate pocket. Tyr-236 functions as the Proton donor in the catalytic mechanism. NAD(+) contacts are provided by residues Lys-245 and 274 to 276 (VVT).

Belongs to the TER reductase family. In terms of assembly, monomer.

The enzyme catalyses a 2,3-saturated acyl-[ACP] + NAD(+) = a (2E)-enoyl-[ACP] + NADH + H(+). It participates in lipid metabolism; fatty acid biosynthesis. Its function is as follows. Involved in the final reduction of the elongation cycle of fatty acid synthesis (FAS II). Catalyzes the reduction of a carbon-carbon double bond in an enoyl moiety that is covalently linked to an acyl carrier protein (ACP). The chain is Enoyl-[acyl-carrier-protein] reductase [NADH] from Xylella fastidiosa (strain Temecula1 / ATCC 700964).